The primary structure comprises 394 residues: 1-deoxy-D-xylulose 5-phosphate reductoisomerase (394 aa).

The NADPH site is built by Thr12, Gly13, Ser14, Ile15, Gly38, Asn41, and Asn132. Residue Lys133 participates in 1-deoxy-D-xylulose 5-phosphate binding. Residue Glu134 participates in NADPH binding. Asp156 provides a ligand contact to Mn(2+). 1-deoxy-D-xylulose 5-phosphate contacts are provided by Ser157, Glu158, Ser182, and His205. Glu158 is a binding site for Mn(2+). Gly211 serves as a coordination point for NADPH. The 1-deoxy-D-xylulose 5-phosphate site is built by Ser218, Asn223, Lys224, and Glu227. Glu227 serves as a coordination point for Mn(2+).

This sequence belongs to the DXR family. It depends on Mg(2+) as a cofactor. The cofactor is Mn(2+).

It carries out the reaction 2-C-methyl-D-erythritol 4-phosphate + NADP(+) = 1-deoxy-D-xylulose 5-phosphate + NADPH + H(+). The protein operates within isoprenoid biosynthesis; isopentenyl diphosphate biosynthesis via DXP pathway; isopentenyl diphosphate from 1-deoxy-D-xylulose 5-phosphate: step 1/6. Its function is as follows. Catalyzes the NADPH-dependent rearrangement and reduction of 1-deoxy-D-xylulose-5-phosphate (DXP) to 2-C-methyl-D-erythritol 4-phosphate (MEP). The protein is 1-deoxy-D-xylulose 5-phosphate reductoisomerase of Pseudarthrobacter chlorophenolicus (strain ATCC 700700 / DSM 12829 / CIP 107037 / JCM 12360 / KCTC 9906 / NCIMB 13794 / A6) (Arthrobacter chlorophenolicus).